Here is a 599-residue protein sequence, read N- to C-terminus: mRNA export factor MEX67 (599 aa).

S2 bears the N-acetylserine mark. LRR repeat units follow at residues 163 to 184 (IVES…STLA) and 189 to 210 (NLKN…EVWK). The 39-residue stretch at 224 to 262 (NPITTDKLYRTEMLRLFPKLVVLDNVIVRDEQKLQTVYS) folds into the LRRCT domain. The region spanning 280-467 (SSTDFATNFL…VIIASDLLTV (188 aa)) is the NTF2 domain. Residues 408–439 (KPELESNKKTGKNNYQKNRRYNHGYNSTSNNK) are disordered. A TAP-C domain is found at 546-599 (PVQLELLNKLHLETKLNAEYTFMLAEQSNWNYEVAIKGFQSSMNGIPREAFVQF).

It belongs to the NXF family. As to quaternary structure, interacts with nucleoporin complex NUP84 and MTR2. Interacts with MIP6.

It localises to the nucleus. Its subcellular location is the cytoplasm. Involved in the export of mRNA from the nucleus to the cytoplasm. The protein is mRNA export factor MEX67 (MEX67) of Saccharomyces cerevisiae (strain ATCC 204508 / S288c) (Baker's yeast).